Here is a 431-residue protein sequence, read N- to C-terminus: Probable glucarate dehydratase (431 aa).

Residues His-29, Thr-108, Tyr-153, and Lys-198 each coordinate substrate. Lys-200 functions as the Proton acceptor in the catalytic mechanism. Mg(2+)-binding residues include Asp-228 and Asn-276. Substrate-binding positions include 228 to 230, Asn-276, 327 to 329, His-356, and Arg-410; these read DPN and HSN. The active-site Proton acceptor is the His-327.

It belongs to the mandelate racemase/muconate lactonizing enzyme family. GlucD subfamily. It depends on Mg(2+) as a cofactor.

It carries out the reaction D-glucarate = 5-dehydro-4-deoxy-D-glucarate + H2O. Its pathway is carbohydrate acid metabolism; D-glucarate degradation; 2,5-dioxopentanoate from D-glucarate: step 1/2. Catalyzes the dehydration of glucarate to 5-keto-4-deoxy-D-glucarate (5-kdGluc). The chain is Probable glucarate dehydratase (gudD) from Streptomyces coelicolor (strain ATCC BAA-471 / A3(2) / M145).